The primary structure comprises 560 residues: Beta-glucosidase 26, peroxisomal (560 aa).

Residues Gln-33, His-137, 182 to 183 (NE), Tyr-326, Glu-398, Trp-450, 457 to 458 (EW), and Tyr-466 each bind a beta-D-glucoside. Glu-183 functions as the Proton donor in the catalytic mechanism. Residue Glu-398 is the Nucleophile of the active site.

Belongs to the glycosyl hydrolase 1 family.

The protein resides in the peroxisome. The catalysed reaction is Hydrolysis of terminal, non-reducing beta-D-glucosyl residues with release of beta-D-glucose.. Possesses beta-glucosidase activity toward 4-methyl-umbelliferyl-beta-D-glucoside in vitro. Possesses myrosinase activity toward indol-3-yl-methylglucosinolate (I3M) and 4-methoxy-indol-3-yl-methylglucosinolate (4MO-I3M) in vivo. Component of an inducible preinvasion resistance mechanism that prevents penetration of the nonhost fungal species B.graminis and E.pisi. Involved in indole glucosinolate (IGS) activation during pattern-triggered immunity (PTI). Functions as a myrosinase for the breakdown of flg22-triggered IGS. Required for both callose deposition and glucosinolate activation during pathogen-triggered resistance. During fungal attack, required for IGS activation that mediates broad-spectrum antifungal defense. The protein is Beta-glucosidase 26, peroxisomal of Arabidopsis thaliana (Mouse-ear cress).